Reading from the N-terminus, the 347-residue chain is GMP reductase (347 aa).

108–131 (ADFEKTVQILALNPALNFVCIDVA) provides a ligand contact to NADP(+). 2 residues coordinate K(+): glycine 181 and glycine 183. Residue cysteine 186 is the Thioimidate intermediate of the active site. 216-239 (IVSDGGCTMPGDVAKAFGGGADFV) contributes to the NADP(+) binding site.

This sequence belongs to the IMPDH/GMPR family. GuaC type 1 subfamily. As to quaternary structure, homotetramer.

The catalysed reaction is IMP + NH4(+) + NADP(+) = GMP + NADPH + 2 H(+). Catalyzes the irreversible NADPH-dependent deamination of GMP to IMP. It functions in the conversion of nucleobase, nucleoside and nucleotide derivatives of G to A nucleotides, and in maintaining the intracellular balance of A and G nucleotides. The chain is GMP reductase from Salmonella paratyphi C (strain RKS4594).